Consider the following 217-residue polypeptide: Putative 8-oxo-dGTP diphosphatase 3 (217 aa).

The 135-residue stretch at 30–164 (GRYGAAGLLL…PGFAASWQRL (135 aa)) folds into the Nudix hydrolase domain. Residues 67 to 92 (LPGGARDSHETPEQTAVRESSEEAGL) form a disordered region. Residues Gly70, Glu85, Glu88, and Glu89 each coordinate Mg(2+). The short motif at 70–91 (GARDSHETPEQTAVRESSEEAG) is the Nudix box element.

The protein belongs to the Nudix hydrolase family. Mg(2+) serves as cofactor. It depends on Mn(2+) as a cofactor.

The catalysed reaction is 8-oxo-dGTP + H2O = 8-oxo-dGMP + diphosphate + H(+). May be involved in the GO system responsible for removing an oxidatively damaged form of guanine (7,8-dihydro-8-oxoguanine, 8-oxo-dGTP) from DNA and the nucleotide pool. 8-oxo-dGTP is inserted opposite dA and dC residues of template DNA with almost equal efficiency thus leading to A.T to G.C transversions. MutT specifically degrades 8-oxo-dGTP to the monophosphate. The chain is Putative 8-oxo-dGTP diphosphatase 3 (mutT3) from Mycobacterium tuberculosis (strain CDC 1551 / Oshkosh).